Consider the following 100-residue polypeptide: Protein RnfH (100 aa).

Belongs to the UPF0125 (RnfH) family.

The polypeptide is Protein RnfH (Pseudomonas paraeruginosa (strain DSM 24068 / PA7) (Pseudomonas aeruginosa (strain PA7))).